The chain runs to 122 residues: Small ribosomal subunit protein uS13 (122 aa).

The tract at residues 99 to 122 (RGQRTHTNARTRKGPAKAIAGKKK) is disordered.

The protein belongs to the universal ribosomal protein uS13 family. As to quaternary structure, part of the 30S ribosomal subunit. Forms a loose heterodimer with protein S19. Forms two bridges to the 50S subunit in the 70S ribosome.

Its function is as follows. Located at the top of the head of the 30S subunit, it contacts several helices of the 16S rRNA. In the 70S ribosome it contacts the 23S rRNA (bridge B1a) and protein L5 of the 50S subunit (bridge B1b), connecting the 2 subunits; these bridges are implicated in subunit movement. Contacts the tRNAs in the A and P-sites. The sequence is that of Small ribosomal subunit protein uS13 from Rhizobium leguminosarum bv. trifolii (strain WSM2304).